The sequence spans 106 residues: Protein translation factor SUI1 homolog (106 aa).

This sequence belongs to the SUI1 family.

In Methanopyrus kandleri (strain AV19 / DSM 6324 / JCM 9639 / NBRC 100938), this protein is Protein translation factor SUI1 homolog.